The chain runs to 339 residues: 4-dimethylallyltryptophan N-methyltransferase easF (339 aa).

Belongs to the methyltransferase superfamily. As to quaternary structure, homodimer.

The catalysed reaction is 4-(3-methylbut-2-enyl)-L-tryptophan + S-adenosyl-L-methionine = 4-(3-methylbut-2-enyl)-L-abrine + S-adenosyl-L-homocysteine + H(+). It functions in the pathway alkaloid biosynthesis; ergot alkaloid biosynthesis. Functionally, 4-dimethylallyltryptophan N-methyltransferase; part of the gene cluster that mediates the biosynthesis of fumiclavanine C, a fungal ergot alkaloid. DmaW catalyzes the first step of ergot alkaloid biosynthesis by condensing dimethylallyl diphosphate (DMAP) and tryptophan to form 4-dimethylallyl-L-tryptophan. The second step is catalyzed by the methyltransferase easF that methylates 4-dimethylallyl-L-tryptophan in the presence of S-adenosyl-L-methionine, resulting in the formation of 4-dimethylallyl-L-abrine. The catalase easC and the FAD-dependent oxidoreductase easE then transform 4-dimethylallyl-L-abrine to chanoclavine-I which is further oxidized by EasD in the presence of NAD(+), resulting in the formation of chanoclavine-I aldehyde. EasA reduces chanoclavine-I aldehyde to dihydrochanoclavine-I aldehyde that spontaneously dehydrates to form 6,8-dimethyl-6,7-didehydroergoline. EasG then catalyzes the reduction of 6,8-dimethyl-6,7-didehydroergoline to form festuclavine. Hydrolysis of festuclavine by easM then leads to the formation of fumigaclavine B which is in turn acetylated by easN to fumigaclavine A. Finally, easL catalyzes the conversion of fumigaclavine A into fumigaclavine C by attaching a dimethylallyl moiety to C-2 of the indole nucleus. The protein is 4-dimethylallyltryptophan N-methyltransferase easF of Aspergillus fumigatus (strain ATCC MYA-4609 / CBS 101355 / FGSC A1100 / Af293) (Neosartorya fumigata).